The sequence spans 64 residues: Conotoxin Im11.4 (64 aa).

An N-terminal signal peptide occupies residues 1–26 (MMFRLTSVSCILLVIAFLNLVGLTNA). 4 disulfides stabilise this stretch: Cys-27-Cys-41, Cys-34-Cys-46, Cys-40-Cys-50, and Cys-45-Cys-54. His-57 bears the Histidine amide mark. Residues 61–64 (ATFQ) constitute a propeptide that is removed on maturation.

Belongs to the conotoxin I2 superfamily. As to expression, expressed by the venom duct.

It localises to the secreted. This is Conotoxin Im11.4 from Conus imperialis (Imperial cone).